The following is a 66-amino-acid chain: MSFMKKSLLLVLFLGVVSLSNCEEEKGENENEDHEEHHEEKRLLGDLLGQTSKLVNDLTDTVGSIV.

The signal sequence occupies residues 1–22 (MSFMKKSLLLVLFLGVVSLSNC). Positions 23 to 40 (EEEKGENENEDHEEHHEE) are excised as a propeptide.

Expressed by the skin glands.

The protein resides in the secreted. Possesses a potent antimicrobial activity against Gram-positive and Gram-negative bacteria. Probably acts by disturbing membrane functions with its amphipathic structure. The protein is Dermaseptin PD-3-7 of Agalychnis dacnicolor (Giant Mexican leaf frog).